The primary structure comprises 443 residues: Xaa-Pro dipeptidase (443 aa).

Positions 246, 257, 339, 384, and 423 each coordinate Mn(2+).

The protein belongs to the peptidase M24B family. Bacterial-type prolidase subfamily. It depends on Mn(2+) as a cofactor.

The enzyme catalyses Xaa-L-Pro dipeptide + H2O = an L-alpha-amino acid + L-proline. Its function is as follows. Splits dipeptides with a prolyl residue in the C-terminal position. The protein is Xaa-Pro dipeptidase of Escherichia coli O81 (strain ED1a).